Consider the following 163-residue polypeptide: Cyclic pyranopterin monophosphate synthase (163 aa).

Substrate-binding positions include 75-77 (LCH) and 113-114 (ME). Asp128 is a catalytic residue.

It belongs to the MoaC family. Homohexamer; trimer of dimers.

The catalysed reaction is (8S)-3',8-cyclo-7,8-dihydroguanosine 5'-triphosphate = cyclic pyranopterin phosphate + diphosphate. It participates in cofactor biosynthesis; molybdopterin biosynthesis. Its function is as follows. Catalyzes the conversion of (8S)-3',8-cyclo-7,8-dihydroguanosine 5'-triphosphate to cyclic pyranopterin monophosphate (cPMP). The chain is Cyclic pyranopterin monophosphate synthase from Magnetococcus marinus (strain ATCC BAA-1437 / JCM 17883 / MC-1).